Reading from the N-terminus, the 76-residue chain is Horsegram inhibitor 1 (76 aa).

Disulfide bonds link cysteine 16–cysteine 70, cysteine 17–cysteine 32, cysteine 20–cysteine 66, cysteine 22–cysteine 30, cysteine 40–cysteine 47, cysteine 44–cysteine 59, and cysteine 49–cysteine 57.

The protein belongs to the Bowman-Birk serine protease inhibitor family. In terms of assembly, HGI-III exists in a state of equilibrium between monomer, homodimer and trimer, with homodimer being the predominant form. The homodimer is stabilized by the non-covalent interaction between Lys-24 of one subunit and Asp-76 of the other subunit. The homodimer is more thermostable than the monomer. HGGI-I, HGGI-II and HGGI-III exist as monomers. HGGI-I, HGGI-II and HGGI-III are produced by proteolysis of the N- and C-termini of HGI-III.

In terms of biological role, inhibitors of trypsin and chymotrypsin. HGGI-III has a higher activity than HGGI-I or HGGI-II. In Vigna unguiculata subsp. cylindrica (Horse gram), this protein is Horsegram inhibitor 1.